A 492-amino-acid polypeptide reads, in one-letter code: Fibroblast growth factor receptor substrate 3 (492 aa).

The N-myristoyl glycine moiety is linked to residue glycine 2. The 103-residue stretch at 13 to 115 folds into the IRS-type PTB domain; the sequence is VPDNHPTKFK…QCNSINVMEE (103 aa). Disordered stretches follow at residues 153-173, 338-455, and 467-492; these read GEGPRFSAPRRLSTSSLRHPS, QLGG…SDSY, and SNLQRALPRDDGTARKTRHNSTDLPL.

As to quaternary structure, binds NTRK1. Binds FGFR1, NGFR, GRB2, PTPN11 and ERK2. Post-translationally, phosphorylated by ULK2 in vitro. Phosphorylated on tyrosine residues upon stimulation by BFGF or NGFB.

It localises to the membrane. Adapter protein that links FGF and NGF receptors to downstream signaling pathways. Involved in the activation of MAP kinases. Down-regulates ERK2 signaling by interfering with the phosphorylation and nuclear translocation of ERK2. This Homo sapiens (Human) protein is Fibroblast growth factor receptor substrate 3 (FRS3).